We begin with the raw amino-acid sequence, 344 residues long: MAP3K12-binding inhibitory protein 1 (344 aa).

Serine 91 carries the phosphoserine modification. Glycyl lysine isopeptide (Lys-Gly) (interchain with G-Cter in SUMO2) cross-links involve residues lysine 94, lysine 118, lysine 129, lysine 139, lysine 153, and lysine 235. An interaction with MAP3K12 region spans residues 172-344 (AEINENNVRE…AESMATHHLP (173 aa)). The segment at 271 to 285 (IYQRIKKLEDKILEL) is leucine-zipper 1. The residue at position 301 (lysine 301) is an N6-acetyllysine; alternate. Lysine 301 participates in a covalent cross-link: Glycyl lysine isopeptide (Lys-Gly) (interchain with G-Cter in SUMO2); alternate. Residues lysine 304 and lysine 325 each participate in a glycyl lysine isopeptide (Lys-Gly) (interchain with G-Cter in SUMO2) cross-link. Positions 314–329 (LAELDEKISALKQALL) are leucine-zipper 2.

Component of the ADA2A-containing complex (ATAC), composed of KAT14, KAT2A, TADA2L, TADA3L, ZZ3, MBIP, WDR5, YEATS2, CCDC101 and DR1. In the complex, it probably interacts directly with KAT2A, KAT14 and WDR5. As to expression, ubiquitous. High expression seen in the heart and lung.

Its subcellular location is the nucleus. The protein resides in the cytoplasm. Functionally, inhibits the MAP3K12 activity to induce the activation of the JNK/SAPK pathway. Component of the ATAC complex, a complex with histone acetyltransferase activity on histones H3 and H4. The polypeptide is MAP3K12-binding inhibitory protein 1 (MBIP) (Homo sapiens (Human)).